Reading from the N-terminus, the 267-residue chain is Octanoyltransferase (267 aa).

A disordered region spans residues 1 to 30 (MPTGKLRQKPPYAAIMTNSPVTPSTETQQP). Positions 16 to 28 (MTNSPVTPSTETQ) are enriched in polar residues. One can recognise a BPL/LPL catalytic domain in the interval 77 to 265 (GTASELVWLV…AFESVFGPRQ (189 aa)). Residues 116 to 123 (RGGEYTYH), 196 to 198 (AIG), and 209 to 211 (GIA) each bind substrate. The Acyl-thioester intermediate role is filled by Cys-227.

It belongs to the LipB family.

It localises to the cytoplasm. The enzyme catalyses octanoyl-[ACP] + L-lysyl-[protein] = N(6)-octanoyl-L-lysyl-[protein] + holo-[ACP] + H(+). The protein operates within protein modification; protein lipoylation via endogenous pathway; protein N(6)-(lipoyl)lysine from octanoyl-[acyl-carrier-protein]: step 1/2. Functionally, catalyzes the transfer of endogenously produced octanoic acid from octanoyl-acyl-carrier-protein onto the lipoyl domains of lipoate-dependent enzymes. Lipoyl-ACP can also act as a substrate although octanoyl-ACP is likely to be the physiological substrate. In Brucella abortus biovar 1 (strain 9-941), this protein is Octanoyltransferase.